Consider the following 145-residue polypeptide: Large ribosomal subunit protein uL13 (145 aa).

The protein belongs to the universal ribosomal protein uL13 family. Part of the 50S ribosomal subunit.

This protein is one of the early assembly proteins of the 50S ribosomal subunit, although it is not seen to bind rRNA by itself. It is important during the early stages of 50S assembly. This Bacillus velezensis (strain DSM 23117 / BGSC 10A6 / LMG 26770 / FZB42) (Bacillus amyloliquefaciens subsp. plantarum) protein is Large ribosomal subunit protein uL13.